The sequence spans 1328 residues: MLLEFLLLIGISLSTACPSECRCAGLDVHCEGKNLTAIPGHIPIATTNLYFSNNLLNSLSKSNFQALPNLQYLDLSNNSIRDIEETLLDSFPGLKYLDLSWNKIRYVPKLSTAPNALVSLNLVHNEISRLDNDLVSHSPYMQTFLIQRNRIQSLPHDFFNSRMVPTLKTVKMAGNPWSCDCRMVNVKQFADSLFAHSNQNIFIVGKCFFPKGLRNYVFRNLSIENLECEKPEYSKTDDGMFKMSCPNNEMEGYHYDSIFLENNKEARHTAHFARDKDGSLLSNGQFTRNYQCAFYRQKQSIHMQKKMQASSSTEPPITTTTMEPMTTSTMDSMDTTESVVTMTTMPEIDTKIVFEHKQLDTTSRDGETLELKCEASGEPTPTITWLFEKQKLTESRKHKLTKNGSVLKIFPFLNTDIGQYECVASNGEESKSHIFSVSLKESEQPVIIDAPMDTNATIGQQVTLRCNAKGFPVPDVVWLFEGIRIPRRNTRYTISDNNIELTIEKVTRHDSGVFTCQAVNSVGSAVATANLLVGAELTEKVDKLLDDSTIEKIAKEAKQKVEKALSSTKDQQRMDKIESPNDLSKLFKFAINLKKVDLGKAREIYEESIRLVQMHIDNGLAFESAMISPNVSYEAVLPVSYVQTLMEKSGCQTGQFAESCEDHCFFSKYRSYDGQCNNHEHPWWGVSEMAFMRLLPPRYENGFNTPVGWEKGKRYNGYEVPNARKVSRVLIGTDETTPHSHLSAMTMQWGQFIDHDLTLTAPALTRHSYKEGAFCNRTCENADPCFNIQLEADDPKLHTGLYQKHPCMEFERNGAACGSGETSPIFQRVTYRDQLNLLTSYLDASGIYGNSEEQALELRDLYSDHGLLRFDIVSGANKPYMPFEKDSDMDCRRNFSRENPIKCFLAGDVRANEQLGLMSMHTIFLREHNRIASRLLEVNENWDGETIFQETRKLIGAMLQHITYNAWLPKILGKATYNTIIGEYKGYNPDVNPTIANEFATAALRFAHTLINTHLFRFDKDFKETKQGHLPLHNAFFAPERLVSEGGVDPLLRGLFAAPIKMPRPDQVLNKELTEKLFNRFHEVALDLAALNIQRGRDHGLPSWTEYRKFCNLTVPKTWSDMKNIVQNDTVISKLQSLYGVTENIDLWVGGVTEKRTADALMGPTLACIIADQFKRLRDGDRFWYENEEMFSKAQLRQIKKVTLSKIICTNGDDIDRIQRDIFVYHGNSTQFYEPCESLPEINLNMWTTCCDAMCSSSSTLARNAIGGDEKAKRRKRRHHHSKKSCHDKGKRRKSGDRWNHSNDICVECMCHDGEVWCKTNNFCKSQV.

Positions 1–16 (MLLEFLLLIGISLSTA) are cleaved as a signal peptide. An LRRNT domain is found at 17–45 (CPSECRCAGLDVHCEGKNLTAIPGHIPIA). A glycan (N-linked (GlcNAc...) asparagine) is linked at asparagine 34. 6 LRR repeats span residues 42 to 66 (IPIATTNLYFSNNLLNSLSKSNFQA), 67 to 90 (LPNLQYLDLSNNSIRDIEETLLDS), 92 to 114 (PGLKYLDLSWNKIRYVPKLSTAP), 116 to 137 (ALVSLNLVHNEISRLDNDLVSH), 138 to 161 (SPYMQTFLIQRNRIQSLPHDFFNS), and 164 to 191 (VPTLKTVKMAGNPWSCDCRMVNVKQFAD). Asparagine 77 is a glycosylation site (N-linked (GlcNAc...) asparagine). Asparagine 220 is a glycosylation site (N-linked (GlcNAc...) asparagine). The disordered stretch occupies residues 305 to 332 (KKMQASSSTEPPITTTTMEPMTTSTMDS). The segment covering 310–332 (SSSTEPPITTTTMEPMTTSTMDS) has biased composition (low complexity). Ig-like C2-type domains lie at 346–438 (PEID…FSVS) and 445–532 (PVII…ANLL). An intrachain disulfide couples cysteine 373 to cysteine 422. Asparagine 403 and asparagine 455 each carry an N-linked (GlcNAc...) asparagine glycan. A disulfide bridge connects residues cysteine 466 and cysteine 516. Residue asparagine 630 is glycosylated (N-linked (GlcNAc...) asparagine). Cysteines 660 and 676 form a disulfide. Aspartate 754 is a binding site for heme b. Histidine 755 serves as the catalytic Proton acceptor. Aspartate 756 serves as a coordination point for Ca(2+). Cystine bridges form between cysteine 775–cysteine 785 and cysteine 779–cysteine 807. N-linked (GlcNAc...) asparagine glycosylation occurs at asparagine 776. Ca(2+) contacts are provided by threonine 839, tyrosine 841, aspartate 843, and serine 845. Asparagine 894 is a glycosylation site (N-linked (GlcNAc...) asparagine). Residues glutamate 913 and histidine 1008 each contribute to the heme b site. Residues 1085–1109 (ALDLAALNIQRGRDHGLPSWTEYRK) form an LRR 7 repeat. Disulfide bonds link cysteine 1111–cysteine 1168 and cysteine 1209–cysteine 1236. N-linked (GlcNAc...) asparagine glycosylation is found at asparagine 1112 and asparagine 1128. One copy of the LRR 8 repeat lies at 1204–1225 (LSKIICTNGDDIDRIQRDIFVY). A glycan (N-linked (GlcNAc...) asparagine) is linked at asparagine 1228. The segment at 1266 to 1297 (IGGDEKAKRRKRRHHHSKKSCHDKGKRRKSGD) is disordered. The segment covering 1273-1295 (KRRKRRHHHSKKSCHDKGKRRKS) has biased composition (basic residues). N-linked (GlcNAc...) asparagine glycosylation is present at asparagine 1300.

This sequence belongs to the peroxidase family. XPO subfamily. Ca(2+) is required as a cofactor. The cofactor is heme b. In terms of tissue distribution, expressed in vulval muscles and in some neurons including PVQ. Expressed in the hypodermis and in coelomocytes.

It localises to the secreted. The protein resides in the extracellular space. The protein localises to the extracellular matrix. Its subcellular location is the basement membrane. It carries out the reaction L-lysyl-[collagen] + L-methionyl-[collagen] + H2O2 = [collagen]-L-lysyl-N-S-L-methionyl-[collagen] + 2 H2O + H(+). It catalyses the reaction bromide + H2O2 = hypobromite + H2O. The catalysed reaction is L-lysyl-[collagen] + L-methionyl-[collagen] + hypobromite = [collagen]-L-lysyl-N-S-L-methionyl-[collagen] + bromide + H2O + H(+). The enzyme catalyses L-tyrosyl-[protein] + bromide + H2O2 + H(+) = 3-bromo-L-tyrosyl-[protein] + 2 H2O. It carries out the reaction hypobromite + L-tyrosyl-[protein] + H(+) = 3-bromo-L-tyrosyl-[protein] + H2O. Its function is as follows. Catalyzes the two-electron oxidation of bromide by hydrogen peroxide and generates hypobromite as a reactive intermediate which mediates the formation of sulfilimine cross-links between methionine and hydroxylysine residues within an uncross-linked collagen IV/COL4A1 NC1 hexamer. Required for embryonic morphogenesis playing a role in epidermal elongation at the twofold stage of embryonic development. Required post-embryonically for basement membrane integrity and muscle-epidermal attachments, and specifically in the function of basement membrane components such as the type IV collagens. May have a role in inhibiting axon regeneration. May functionally antagonize the peroxidasin pxn-1. This chain is Peroxidasin homolog pxn-2, found in Caenorhabditis elegans.